A 221-amino-acid polypeptide reads, in one-letter code: Iron-sulfur cluster repair protein YtfE (221 aa).

The protein belongs to the RIC family. YtfE subfamily. In terms of assembly, homodimer.

The protein resides in the cytoplasm. Di-iron-containing protein involved in the repair of iron-sulfur clusters damaged by oxidative and nitrosative stress conditions. This is Iron-sulfur cluster repair protein YtfE from Dickeya chrysanthemi (strain Ech1591) (Dickeya zeae (strain Ech1591)).